A 221-amino-acid polypeptide reads, in one-letter code: Orotate phosphoribosyltransferase (221 aa).

A 5-phospho-alpha-D-ribose 1-diphosphate-binding site is contributed by K27. 35 to 36 (FF) contacts orotate. Residues 75 to 76 (YK), R102, K103, K106, H108, and 128 to 136 (DDVLTAGTA) contribute to the 5-phospho-alpha-D-ribose 1-diphosphate site. Orotate-binding residues include T132 and R160.

Belongs to the purine/pyrimidine phosphoribosyltransferase family. PyrE subfamily. Homodimer. Mg(2+) is required as a cofactor.

It carries out the reaction orotidine 5'-phosphate + diphosphate = orotate + 5-phospho-alpha-D-ribose 1-diphosphate. Its pathway is pyrimidine metabolism; UMP biosynthesis via de novo pathway; UMP from orotate: step 1/2. In terms of biological role, catalyzes the transfer of a ribosyl phosphate group from 5-phosphoribose 1-diphosphate to orotate, leading to the formation of orotidine monophosphate (OMP). The sequence is that of Orotate phosphoribosyltransferase from Dichelobacter nodosus (strain VCS1703A).